A 345-amino-acid chain; its full sequence is Ferrochelatase (345 aa).

2 residues coordinate Fe cation: His-199 and Glu-302.

This sequence belongs to the ferrochelatase family.

It localises to the cytoplasm. It catalyses the reaction heme b + 2 H(+) = protoporphyrin IX + Fe(2+). Its pathway is porphyrin-containing compound metabolism; protoheme biosynthesis; protoheme from protoporphyrin-IX: step 1/1. In terms of biological role, catalyzes the ferrous insertion into protoporphyrin IX. This is Ferrochelatase from Porphyromonas gingivalis (strain ATCC 33277 / DSM 20709 / CIP 103683 / JCM 12257 / NCTC 11834 / 2561).